A 3343-amino-acid polypeptide reads, in one-letter code: Breast cancer type 2 susceptibility protein homolog (3343 aa).

An interaction with PALB2 region spans residues 1–40 (MTVEYKRRPTFWEIFKARCSTADLGPISLNWFEELFSEAP). The disordered stretch occupies residues 40 to 60 (PPYNTEHPEESEYKPQGHEPQ). Positions 45 to 56 (EHPEESEYKPQG) are enriched in basic and acidic residues. Position 70 is a phosphoserine (serine 70). Residues 348–381 (IEPRDSEPLDPSVTNQKPLYSQSGDISSEAGQCS) are disordered. The span at 359 to 381 (SVTNQKPLYSQSGDISSEAGQCS) shows a compositional bias: polar residues. Phosphoserine occurs at positions 475 and 736. The tract at residues 622 to 982 (PDSSIKRSNL…DKWSEFLDPL (361 aa)) is interaction with NPM1. 8 BRCA2 repeats span residues 984 to 1018 (NHKL…DIEE), 1197 to 1231 (KEME…DIEN), 1405 to 1439 (MKEF…QETE), 1503 to 1537 (KEPT…ETQY), 1645 to 1669 (CYTG…WLRE), 1828 to 1845 (FITT…IFTD), 1939 to 1973 (PSRT…EIDG), and 2019 to 2053 (SSFV…EFDL). An interaction with RAD51 region spans residues 985-2050 (HKLGGSFRTA…LHKVKGMLEE (1066 aa)). Disordered stretches follow at residues 2059 to 2138 (TLQH…VLGT), 2297 to 2356 (PFCS…SDKS), and 2377 to 2407 (DSKN…PQFN). The residue at position 2063 (serine 2063) is a Phosphoserine. Composition is skewed to polar residues over residues 2083-2094 (PEYSVSSKLQKT) and 2101-2125 (SPSN…QLSQ). Residues 2233–2300 (RKRGGMAGVA…EPVTCGPFCS (68 aa)) form an interaction with HSF2BP region. 2 stretches are compositionally biased toward polar residues: residues 2307 to 2320 (TQSP…QGLQ) and 2332 to 2342 (GKSSSNPTVSA). The interval 2313-2475 (TSPAQGLQSK…SPKQLYMYGV (163 aa)) is interaction with FANCD2. Over residues 2344 to 2356 (RSERTRHSVSDKS) the composition is skewed to basic and acidic residues. Residues 2411 to 2762 (MSSLQNARDL…QRVYPLQWVE (352 aa)) form an interaction with SEM1 region. The short motif at 2612–2628 (AAKTLVLCVSDIISLST) is the Nuclear export signal; masked by interaction with SEM1 element. The interval 3114–3163 (DSPKWSTPNKDPTREPYPASTCSASDLASGGQLPRSSPTDQQSYRSPLSC) is disordered. Residues 3147–3163 (PRSSPTDQQSYRSPLSC) are compositionally biased toward polar residues. Serine 3222 bears the Phosphoserine; by CDK1 and CDK2 mark. Disordered stretches follow at residues 3231-3255 (PPRS…WSRA) and 3289-3343 (VGGS…PDYS). Serine 3250 is subject to Phosphoserine. The span at 3295–3310 (VFPSDSTRTEGPSAST) shows a compositional bias: polar residues. Positions 3318 to 3334 (SKRESLRDCRDDSDGKL) are enriched in basic and acidic residues.

Monomer and dimer. Interacts with RAD51; regulates RAD51 recruitment and function at sites of DNA repair. Interacts with SEM1, WDR16, USP11, DMC1, ROCK2 and NPM1. Interacts with both nonubiquitinated and monoubiquitinated FANCD2; this complex also includes XRCC3 and phosphorylated FANCG. Part of a BRCA complex containing BRCA1, BRCA2 and PALB2. Component of the homologous recombination repair (HR) complex composed of ERCC5/XPG, BRCA2, PALB2, DSS1 and RAD51. Within the complex, interacts with ERCC5/XPG and PALB2. Interacts directly with PALB2 which may serve as a scaffold for a HR complex containing PALB2, BRCA2, RAD51C, RAD51 and XRCC3. Interacts with BRCA1 only in the presence of PALB2 which serves as the bridging protein. Interacts with POLH; the interaction is direct. Interacts with the TREX-2 complex subunits PCID2 and SEM1. Interacts with HSF2BP and BRME1; the interaction with HSF2BP is direct and allows the formation of a ternary complex. The complex BRME1:HSF2BP:BRCA2 interacts with SPATA22, MEIOB and RAD51. Post-translationally, phosphorylated by ATM upon irradiation-induced DNA damage. Phosphorylation by CHEK1 and CHEK2 regulates interaction with RAD51. Phosphorylation at Ser-3222 by CDK1 and CDK2 is low in S phase when recombination is active, but increases as cells progress towards mitosis; this phosphorylation prevents homologous recombination-dependent repair during S phase and G2 by inhibiting RAD51 binding. In terms of processing, ubiquitinated in the absence of DNA damage; this does not lead to proteasomal degradation. In contrast, ubiquitination in response to DNA damage leads to proteasomal degradation. Highest expression in testis. Also expressed in spleen, skeletal muscle, thymus, mammary gland, heart, ovary, prostate, liver, lung, kidney and brain.

The protein resides in the nucleus. It is found in the cytoplasm. It localises to the cytoskeleton. Its subcellular location is the microtubule organizing center. The protein localises to the centrosome. In terms of biological role, involved in double-strand break repair and/or homologous recombination. Binds RAD51 and potentiates recombinational DNA repair by promoting assembly of RAD51 onto single-stranded DNA (ssDNA). Acts by targeting RAD51 to ssDNA over double-stranded DNA, enabling RAD51 to displace replication protein-A (RPA) from ssDNA and stabilizing RAD51-ssDNA filaments by blocking ATP hydrolysis. Part of a PALB2-scaffolded HR complex containing RAD51C and which is thought to play a role in DNA repair by HR. May participate in S phase checkpoint activation. Binds selectively to ssDNA, and to ssDNA in tailed duplexes and replication fork structures. May play a role in the extension step after strand invasion at replication-dependent DNA double-strand breaks; together with PALB2 is involved in both POLH localization at collapsed replication forks and DNA polymerization activity. In concert with NPM1, regulates centrosome duplication. Interacts with the TREX-2 complex (transcription and export complex 2) subunits PCID2 and SEM1, and is required to prevent R-loop-associated DNA damage and thus transcription-associated genomic instability, independently of its known role in homologous recombination. The polypeptide is Breast cancer type 2 susceptibility protein homolog (Rattus norvegicus (Rat)).